The sequence spans 526 residues: Outer capsid protein VP5 (526 aa).

The involved in membrane permeabilization stretch occupies residues 1–42 (MGKIIKSLSRFGKKVGNALTSNTAKKIYSTIGKAAERFAESE).

The protein belongs to the orbivirus VP5 family.

It is found in the virion. VP5 protein is one of the two proteins (with VP2) which constitute the virus particle outer capsid. Acts as a membrane permeabilization protein that mediates release of viral particles from endosomal compartments into the cytoplasm. Permeabilization activity is probably negatively regulated by VP2 and is triggered by endosomal degradation of VP2 and exposure to low pH. The sequence is that of Outer capsid protein VP5 (Segment-6) from Bluetongue virus 11 (isolate USA) (BTV 11).